A 372-amino-acid chain; its full sequence is NAD(P)H-quinone oxidoreductase subunit 1 (372 aa).

A run of 8 helical transmembrane segments spans residues 29-49 (WIPL…LVVV), 97-117 (WLFT…YLIV), 130-150 (VGIF…LMSG), 176-196 (LAFS…IDIV), 204-224 (ILGW…IAAL), 254-274 (FGLF…VFAI), 308-328 (SLGI…AVLL), and 347-367 (FLLP…LAFP).

Belongs to the complex I subunit 1 family. In terms of assembly, NDH-1 is composed of at least 11 different subunits.

It is found in the cellular thylakoid membrane. It catalyses the reaction a plastoquinone + NADH + (n+1) H(+)(in) = a plastoquinol + NAD(+) + n H(+)(out). The enzyme catalyses a plastoquinone + NADPH + (n+1) H(+)(in) = a plastoquinol + NADP(+) + n H(+)(out). In terms of biological role, NDH-1 shuttles electrons from an unknown electron donor, via FMN and iron-sulfur (Fe-S) centers, to quinones in the respiratory and/or the photosynthetic chain. The immediate electron acceptor for the enzyme in this species is believed to be plastoquinone. Couples the redox reaction to proton translocation, and thus conserves the redox energy in a proton gradient. In Rippkaea orientalis (strain PCC 8801 / RF-1) (Cyanothece sp. (strain PCC 8801)), this protein is NAD(P)H-quinone oxidoreductase subunit 1.